Consider the following 798-residue polypeptide: Penicillin-binding protein 1A (798 aa).

Residues isoleucine 2 to cysteine 9 lie on the Cytoplasmic side of the membrane. The helical; Signal-anchor for type II membrane protein transmembrane segment at phenylalanine 10–valine 30 threads the bilayer. At threonine 31 to phenylalanine 798 the chain is on the periplasmic side. A transglycosylase region spans residues leucine 50–glutamate 218. The active-site Proton donor; for transglycosylase activity is the glutamate 88. A transpeptidase region spans residues arginine 378–aspartate 700. The active-site Acyl-ester intermediate; for transpeptidase activity is serine 461. The segment at leucine 739–phenylalanine 798 is disordered. Over residues glutamine 766 to valine 777 the composition is skewed to basic and acidic residues. Residues leucine 783–phenylalanine 798 are compositionally biased toward polar residues.

This sequence in the N-terminal section; belongs to the glycosyltransferase 51 family. The protein in the C-terminal section; belongs to the transpeptidase family.

Its subcellular location is the cell inner membrane. The catalysed reaction is [GlcNAc-(1-&gt;4)-Mur2Ac(oyl-L-Ala-gamma-D-Glu-L-Lys-D-Ala-D-Ala)](n)-di-trans,octa-cis-undecaprenyl diphosphate + beta-D-GlcNAc-(1-&gt;4)-Mur2Ac(oyl-L-Ala-gamma-D-Glu-L-Lys-D-Ala-D-Ala)-di-trans,octa-cis-undecaprenyl diphosphate = [GlcNAc-(1-&gt;4)-Mur2Ac(oyl-L-Ala-gamma-D-Glu-L-Lys-D-Ala-D-Ala)](n+1)-di-trans,octa-cis-undecaprenyl diphosphate + di-trans,octa-cis-undecaprenyl diphosphate + H(+). It catalyses the reaction Preferential cleavage: (Ac)2-L-Lys-D-Ala-|-D-Ala. Also transpeptidation of peptidyl-alanyl moieties that are N-acyl substituents of D-alanine.. Its pathway is cell wall biogenesis; peptidoglycan biosynthesis. Functionally, cell wall formation. Synthesis of cross-linked peptidoglycan from the lipid intermediates. The enzyme has a penicillin-insensitive transglycosylase N-terminal domain (formation of linear glycan strands) and a penicillin-sensitive transpeptidase C-terminal domain (cross-linking of the peptide subunits). Essential for cell wall synthesis. The protein is Penicillin-binding protein 1A (mrcA) of Neisseria gonorrhoeae (strain ATCC 700825 / FA 1090).